A 308-amino-acid polypeptide reads, in one-letter code: UPF0282 protein PYRAB09800 (308 aa).

It belongs to the UPF0282 family.

This Pyrococcus abyssi (strain GE5 / Orsay) protein is UPF0282 protein PYRAB09800.